The following is a 353-amino-acid chain: Cyanuric acid amidohydrolase (353 aa).

The interval 1 to 90 (MSSTALYTVP…NIFVRDERQY (90 aa)) is RU A. Residues R49 and 69–70 (SG) each bind substrate. An RU B region spans residues 96 to 231 (GLVTAVGRTR…CHILVVAESD (136 aa)). Residue K145 is part of the active site. Residues R177 and 214–215 (SS) contribute to the substrate site. S214 acts as the Nucleophile in catalysis. The tract at residues 237–353 (LRAAHTAMRD…TANATGEASR (117 aa)) is RU C. E275 is a binding site for Mg(2+). Substrate-binding positions include R302 and 321–322 (SG). Mg(2+) is bound by residues A324, Q327, G328, P329, and G332.

It belongs to the cyclic amide hydrolase (CyAH) family. In terms of assembly, homotetramer.

It catalyses the reaction cyanurate + H2O = 1-carboxybiuret + H(+). It participates in xenobiotic degradation; atrazine degradation; biuret from cyanurate: step 1/1. Its activity is regulated as follows. Inhibited by barbituric acid. Responsible for the hydrolysis of cyanuric acid, an intermediate formed during catabolism of s-triazine based compounds in herbicides such as atrazine and polymers such as melamine. Catalyzes the hydrolytic opening of the s-triazine ring of cyanuric acid (2,4,6-trihydroxy-s-triazine) to yield carbon dioxide and carboxybiuret, which spontaneously decarboxylates to biuret. Required for growth on melamine or cyanuric acid as sole nitrogen source. The protein is Cyanuric acid amidohydrolase of Rhodococcus sp.